The sequence spans 876 residues: Alanine--tRNA ligase (876 aa).

Lysine 74 is modified (N6-acetyllysine). The Zn(2+) site is built by histidine 564, histidine 568, cysteine 666, and histidine 670.

It belongs to the class-II aminoacyl-tRNA synthetase family. In terms of assembly, homotetramer. Zn(2+) is required as a cofactor.

The protein localises to the cytoplasm. The enzyme catalyses tRNA(Ala) + L-alanine + ATP = L-alanyl-tRNA(Ala) + AMP + diphosphate. Its function is as follows. Catalyzes the attachment of alanine to tRNA(Ala) in a two-step reaction: alanine is first activated by ATP to form Ala-AMP and then transferred to the acceptor end of tRNA(Ala). Also edits incorrectly charged Ser-tRNA(Ala) and Gly-tRNA(Ala) via its editing domain. This Shigella boydii serotype 4 (strain Sb227) protein is Alanine--tRNA ligase.